Consider the following 311-residue polypeptide: MQACTLIARAKINLYLEILGSRPDGYSEVAMVLQSIHLADRLQLKSRPHGIHLTCDRPEVPTDARNLAYQAAELLQKECHSAAGVEIHIEKHIPVAAGLAGGSADAAAVLVGLNQLWGLGLTVGELQSLAARLGSDIPFCIQGGTQLATGRGEVLEPLADWEGIPVLLAKPKHLGVSTAWAYQAFRSRREILGATAPSEPALPTLPQALAALSRQDPPALARSLRNDLEQVVLPEYAIVGELRQALLSAGALGSLMSGSGPTVFGIMPSLELAAQARDTLRRQFQDVEFWVTQFAPTGILLQPDPCSLSPS.

Lysine 11 is an active-site residue. 94–104 is an ATP binding site; that stretch reads PVAAGLAGGSA. Residue aspartate 136 is part of the active site.

This sequence belongs to the GHMP kinase family. IspE subfamily.

The enzyme catalyses 4-CDP-2-C-methyl-D-erythritol + ATP = 4-CDP-2-C-methyl-D-erythritol 2-phosphate + ADP + H(+). The protein operates within isoprenoid biosynthesis; isopentenyl diphosphate biosynthesis via DXP pathway; isopentenyl diphosphate from 1-deoxy-D-xylulose 5-phosphate: step 3/6. Its function is as follows. Catalyzes the phosphorylation of the position 2 hydroxy group of 4-diphosphocytidyl-2C-methyl-D-erythritol. In Synechococcus sp. (strain JA-2-3B'a(2-13)) (Cyanobacteria bacterium Yellowstone B-Prime), this protein is 4-diphosphocytidyl-2-C-methyl-D-erythritol kinase.